The primary structure comprises 262 residues: Proteasome subunit alpha (262 aa).

A disordered region spans residues 235–262; the sequence is LLPTTGESDAGDSGADGSPSGDSPDTSA.

It belongs to the peptidase T1A family. In terms of assembly, the 20S proteasome core is composed of 14 alpha and 14 beta subunits that assemble into four stacked heptameric rings, resulting in a barrel-shaped structure. The two inner rings, each composed of seven catalytic beta subunits, are sandwiched by two outer rings, each composed of seven alpha subunits. The catalytic chamber with the active sites is on the inside of the barrel. Has a gated structure, the ends of the cylinder being occluded by the N-termini of the alpha-subunits. Is capped by the proteasome-associated ATPase, ARC.

Its subcellular location is the cytoplasm. It functions in the pathway protein degradation; proteasomal Pup-dependent pathway. The formation of the proteasomal ATPase ARC-20S proteasome complex, likely via the docking of the C-termini of ARC into the intersubunit pockets in the alpha-rings, may trigger opening of the gate for substrate entry. Interconversion between the open-gate and close-gate conformations leads to a dynamic regulation of the 20S proteasome proteolysis activity. In terms of biological role, component of the proteasome core, a large protease complex with broad specificity involved in protein degradation. This Gordonia bronchialis (strain ATCC 25592 / DSM 43247 / BCRC 13721 / JCM 3198 / KCTC 3076 / NBRC 16047 / NCTC 10667) (Rhodococcus bronchialis) protein is Proteasome subunit alpha.